A 105-amino-acid chain; its full sequence is Large ribosomal subunit protein uL24 (105 aa).

Belongs to the universal ribosomal protein uL24 family. In terms of assembly, part of the 50S ribosomal subunit.

One of two assembly initiator proteins, it binds directly to the 5'-end of the 23S rRNA, where it nucleates assembly of the 50S subunit. Functionally, one of the proteins that surrounds the polypeptide exit tunnel on the outside of the subunit. In Vibrio vulnificus (strain YJ016), this protein is Large ribosomal subunit protein uL24.